A 303-amino-acid chain; its full sequence is Glycine--tRNA ligase alpha subunit (303 aa).

It belongs to the class-II aminoacyl-tRNA synthetase family. As to quaternary structure, tetramer of two alpha and two beta subunits.

It localises to the cytoplasm. The catalysed reaction is tRNA(Gly) + glycine + ATP = glycyl-tRNA(Gly) + AMP + diphosphate. The polypeptide is Glycine--tRNA ligase alpha subunit (Streptococcus equi subsp. equi (strain 4047)).